The primary structure comprises 541 residues: Chaperonin GroEL 1 (541 aa).

ATP is bound by residues 29–32, 86–90, Gly-413, 477–479, and Asp-493; these read TLGP, DGTTT, and NAA.

The protein belongs to the chaperonin (HSP60) family. As to quaternary structure, forms a cylinder of 14 subunits composed of two heptameric rings stacked back-to-back. Interacts with the co-chaperonin GroES.

It localises to the cytoplasm. It carries out the reaction ATP + H2O + a folded polypeptide = ADP + phosphate + an unfolded polypeptide.. In terms of biological role, together with its co-chaperonin GroES, plays an essential role in assisting protein folding. The GroEL-GroES system forms a nano-cage that allows encapsulation of the non-native substrate proteins and provides a physical environment optimized to promote and accelerate protein folding. The protein is Chaperonin GroEL 1 of Nocardioides sp. (strain ATCC BAA-499 / JS614).